A 159-amino-acid polypeptide reads, in one-letter code: Serine-protein kinase RsbW (159 aa).

Belongs to the anti-sigma-factor family.

The enzyme catalyses L-seryl-[protein] + ATP = O-phospho-L-seryl-[protein] + ADP + H(+). It carries out the reaction L-threonyl-[protein] + ATP = O-phospho-L-threonyl-[protein] + ADP + H(+). Functionally, negative regulator of sigma-B activity. Phosphorylates and inactivates its specific antagonist protein, RsbV. Upon phosphorylation of RsbV, RsbW is released and binds to sigma-B, thereby blocking its ability to form an RNA polymerase holoenzyme (E-sigma-B). This is Serine-protein kinase RsbW from Staphylococcus aureus.